Consider the following 397-residue polypeptide: Linalool dehydratase/isomerase (397 aa).

Residues 1–26 (MRFTLKTTAIVSAAALLAGFGPPPRA) form the signal peptide. The active-site Proton donor/acceptor is the Asp64. 2 cysteine pairs are disulfide-bonded: Cys74-Cys127 and Cys196-Cys205. Cys196 contributes to the (2E)-geraniol binding site.

In terms of assembly, homotetramer. Homopentamer.

It is found in the periplasm. It carries out the reaction (S)-linalool = beta-myrcene + H2O. It catalyses the reaction (2E)-geraniol = (S)-linalool. It functions in the pathway terpene metabolism; monoterpene degradation. With respect to regulation, is inhibited by molecular oxygen, high salt concentrations (NaCl, KCl, or MgCl(2)), urea, and Ti(III)citrate. Activity is not affected by EDTA. Functionally, anaerobically catalyzes the stereospecific hydration of beta-myrcene to (3S)-linalool and the isomerization of (3S)-linalool to geraniol. Is thus involved in the initial steps of the anaerobic degradation of the monoterpene beta-myrcene. Also catalyzes the reverse reactions, i.e. the isomerization of geraniol to linalool and the dehydration of linalool to myrcene. In this direction, the formation of myrcene from geraniol may be seen as a detoxification process for the monoterpene alcohol. Shows a relatively broad substrate specificity and can use various geraniol and linalool derivatives. Substrates required a specific alpha-methylallyl alcohol signature motif. Neither the monoterpenes alpha- and beta-ocimene nor the monoterpenoids citronellol and nerol can be used as substrates. The polypeptide is Linalool dehydratase/isomerase (Castellaniella defragrans (strain DSM 12143 / CCUG 39792 / 65Phen) (Alcaligenes defragrans)).